A 299-amino-acid chain; its full sequence is Taste receptor type 2 member 4 (299 aa).

Over 1–9 (MLRLFYFSA) the chain is Extracellular. Residues 10 to 30 (IIASVILNFVGIIMNLFITVV) form a helical membrane-spanning segment. Topologically, residues 31–46 (NCKTWVKSHRISSSDR) are cytoplasmic. Residues 47-67 (ILFSLGITRFLMLGLFLVNTI) traverse the membrane as a helical segment. Residues 68–81 (YFVSSNXERSVYLS) are Extracellular-facing. Residues 82 to 102 (AFFVLCFMFLDSSSLWFVTLL) traverse the membrane as a helical segment. Residues 103 to 131 (NILYCVKITNFQHSVFLLLKRNISPKIPR) are Cytoplasmic-facing. Residues 132-152 (LLLACVLISAFTTCLYITLSQ) traverse the membrane as a helical segment. Over 153–172 (ASPFPELVTTRNNTSFNINE) the chain is Extracellular. N164 and N165 each carry an N-linked (GlcNAc...) asparagine glycan. Residues 173–193 (GILSLVVSLVLSSSLQFIINV) traverse the membrane as a helical segment. Residues 194-230 (TSASLLIHSLRRHIQKMQKNATGFWNPQTEAHVGAMK) are Cytoplasmic-facing. A helical transmembrane segment spans residues 231 to 251 (LMVYFLILYIPYSVATLVQYL). Over 252–262 (PFYAGMDMGTK) the chain is Extracellular. A helical membrane pass occupies residues 263–283 (SICLIFATLYSPGHSVLIIIT). Residues 284-299 (HPKLKTTAKKILCFKK) are Cytoplasmic-facing.

This sequence belongs to the G-protein coupled receptor T2R family.

It localises to the membrane. It is found in the cell projection. The protein resides in the cilium membrane. Functionally, gustducin-coupled receptor implicated in the perception of bitter compounds in the oral cavity and the gastrointestinal tract. Signals through PLCB2 and the calcium-regulated cation channel TRPM5. In airway epithelial cells, binding of denatonium increases the intracellular calcium ion concentration and stimulates ciliary beat frequency. This Pan troglodytes (Chimpanzee) protein is Taste receptor type 2 member 4 (TAS2R4).